The chain runs to 332 residues: Ketol-acid reductoisomerase (NADP(+)) (332 aa).

In terms of domain architecture, KARI N-terminal Rossmann spans 1 to 182 (MAVIYYDKDC…GSNRAGILET (182 aa)). NADP(+)-binding positions include 25-28 (YGAQ) and 83-86 (DTSQ). The active site involves histidine 108. Glycine 134 provides a ligand contact to NADP(+). Residues 183 to 328 (TFAEETETDL…AELRSMMSWL (146 aa)) form the KARI C-terminal knotted domain. Mg(2+) contacts are provided by aspartate 191, glutamate 195, glutamate 227, and glutamate 231. A substrate-binding site is contributed by serine 252.

Belongs to the ketol-acid reductoisomerase family. Requires Mg(2+) as cofactor.

It carries out the reaction (2R)-2,3-dihydroxy-3-methylbutanoate + NADP(+) = (2S)-2-acetolactate + NADPH + H(+). The catalysed reaction is (2R,3R)-2,3-dihydroxy-3-methylpentanoate + NADP(+) = (S)-2-ethyl-2-hydroxy-3-oxobutanoate + NADPH + H(+). It participates in amino-acid biosynthesis; L-isoleucine biosynthesis; L-isoleucine from 2-oxobutanoate: step 2/4. The protein operates within amino-acid biosynthesis; L-valine biosynthesis; L-valine from pyruvate: step 2/4. In terms of biological role, involved in the biosynthesis of branched-chain amino acids (BCAA). Catalyzes an alkyl-migration followed by a ketol-acid reduction of (S)-2-acetolactate (S2AL) to yield (R)-2,3-dihydroxy-isovalerate. In the isomerase reaction, S2AL is rearranged via a Mg-dependent methyl migration to produce 3-hydroxy-3-methyl-2-ketobutyrate (HMKB). In the reductase reaction, this 2-ketoacid undergoes a metal-dependent reduction by NADPH to yield (R)-2,3-dihydroxy-isovalerate. This Dehalococcoides mccartyi (strain ATCC BAA-2100 / JCM 16839 / KCTC 5957 / BAV1) protein is Ketol-acid reductoisomerase (NADP(+)).